Consider the following 362-residue polypeptide: Sulfoquinovose monooxygenase (362 aa).

It belongs to the SsuD family.

It catalyses the reaction 6-sulfo-D-quinovose + FMNH2 + O2 = 6-dehydro-D-glucose + FMN + sulfite + H2O + 2 H(+). Its function is as follows. Part of the alkanesulfonate monooxygenase (sulfo-ASMO) pathway, a D-sulfoquinovose degradation pathway that enables the complete utilization of all carbons within sulfoquinovose (SQ) with concomitant production of inorganic sulfite. Catalyzes the oxidative desulfurization of sulfoquinovose to sulfite and 6-dehydro-D-glucose. In Novosphingobium aromaticivorans (strain ATCC 700278 / DSM 12444 / CCUG 56034 / CIP 105152 / NBRC 16084 / F199), this protein is Sulfoquinovose monooxygenase.